Here is a 406-residue protein sequence, read N- to C-terminus: Peptidase T (406 aa).

Zn(2+) is bound at residue histidine 78. Residue aspartate 80 is part of the active site. Aspartate 139 contacts Zn(2+). Residue glutamate 173 is the Proton acceptor of the active site. 3 residues coordinate Zn(2+): glutamate 174, aspartate 196, and histidine 378.

Belongs to the peptidase M20B family. Zn(2+) serves as cofactor.

It localises to the cytoplasm. It carries out the reaction Release of the N-terminal residue from a tripeptide.. Cleaves the N-terminal amino acid of tripeptides. This is Peptidase T from Clostridium perfringens (strain SM101 / Type A).